Consider the following 1175-residue polypeptide: Major DNA-binding protein (1175 aa).

The segment at 496–509 is a zinc-finger region; that stretch reads CSLCDRASRPACAH. The Required for filament formation signature appears at 825–826; it reads FW. Positions 1151–1175 are required for nuclear localization; the sequence is KRPPPEDDLFDMGAPPEKRLTFDML.

It belongs to the herpesviridae major DNA-binding protein family. In terms of assembly, homooligomers. Forms double-helical filaments necessary for the formation of replication compartments within the host nucleus. Interacts with the origin-binding protein. Interacts with the helicase primase complex; this interaction stimulates primer synthesis activity of the helicase-primase complex. Interacts with the DNA polymerase. Interacts with the alkaline exonuclease; this interaction increases its nuclease processivity.

Its subcellular location is the host nucleus. Functionally, plays several crucial roles in viral infection. Participates in the opening of the viral DNA origin to initiate replication by interacting with the origin-binding protein. May disrupt loops, hairpins and other secondary structures present on ssDNA to reduce and eliminate pausing of viral DNA polymerase at specific sites during elongation. Promotes viral DNA recombination by performing strand-transfer, characterized by the ability to transfer a DNA strand from a linear duplex to a complementary single-stranded DNA circle. Can also catalyze the renaturation of complementary single strands. Additionally, reorganizes the host cell nucleus, leading to the formation of prereplicative sites and replication compartments. This process is driven by the protein which can form double-helical filaments in the absence of DNA. This Suid herpesvirus 1 (SuHV-1) protein is Major DNA-binding protein.